Consider the following 212-residue polypeptide: 3,4-dihydroxy-2-butanone 4-phosphate synthase (212 aa).

D-ribulose 5-phosphate contacts are provided by residues 37–38 (RE), aspartate 42, 150–154 (RRGHT), and glutamate 174. Glutamate 38 provides a ligand contact to Mg(2+). Residue histidine 153 participates in Mg(2+) binding.

Belongs to the DHBP synthase family. As to quaternary structure, homodimer. The cofactor is Mg(2+). It depends on Mn(2+) as a cofactor.

It carries out the reaction D-ribulose 5-phosphate = (2S)-2-hydroxy-3-oxobutyl phosphate + formate + H(+). The protein operates within cofactor biosynthesis; riboflavin biosynthesis; 2-hydroxy-3-oxobutyl phosphate from D-ribulose 5-phosphate: step 1/1. Catalyzes the conversion of D-ribulose 5-phosphate to formate and 3,4-dihydroxy-2-butanone 4-phosphate. This is 3,4-dihydroxy-2-butanone 4-phosphate synthase from Histophilus somni (strain 129Pt) (Haemophilus somnus).